The sequence spans 735 residues: Catalase-peroxidase (735 aa).

A cross-link (tryptophyl-tyrosyl-methioninium (Trp-Tyr) (with M-246)) is located at residues 97-220; it reads WHAAGTYRIG…LAAVQMGLIY (124 aa). The active-site Proton acceptor is the H98. The tryptophyl-tyrosyl-methioninium (Tyr-Met) (with W-97) cross-link spans 220-246; it reads YVNPEGPNGKPDPMAAAHDIRETFGRM. Residue H261 participates in heme b binding. The disordered stretch occupies residues 342–362; it reads AHQWTPKNPEAASTVPDAHDP.

It belongs to the peroxidase family. Peroxidase/catalase subfamily. In terms of assembly, homodimer or homotetramer. Heme b serves as cofactor. Formation of the three residue Trp-Tyr-Met cross-link is important for the catalase, but not the peroxidase activity of the enzyme.

The enzyme catalyses H2O2 + AH2 = A + 2 H2O. The catalysed reaction is 2 H2O2 = O2 + 2 H2O. Functionally, bifunctional enzyme with both catalase and broad-spectrum peroxidase activity. In Gloeobacter violaceus (strain ATCC 29082 / PCC 7421), this protein is Catalase-peroxidase.